A 314-amino-acid polypeptide reads, in one-letter code: Taste receptor type 2 member 42 (314 aa).

Residues 1–7 (MATEMDK) are Extracellular-facing. A helical membrane pass occupies residues 8–28 (IFLTLATVEFIIGMLGNVFIG). The Cytoplasmic segment spans residues 29–50 (LVNCSEGIKNQKVFSVDFILTC). Residues 51–71 (LAISTIGHLLVILFDSCVVGL) form a helical membrane-spanning segment. Residues 72-101 (APHLYATDRVRRPVTMLWHMXNHLTTWLAT) lie on the Extracellular side of the membrane. Residues 102 to 122 (CLSIFYFFKIAHFPHSLFLWL) traverse the membrane as a helical segment. The Cytoplasmic portion of the chain corresponds to 123–127 (RWRMN). The helical transmembrane segment at 128-148 (RVIAILLTLSLFLLIFDCLVL) threads the bilayer. The Extracellular segment spans residues 149-187 (EMFIDXSLNIIDKSNLTLYLDESKTPYDKLSLLKILLSL). N163 is a glycosylation site (N-linked (GlcNAc...) asparagine). A helical transmembrane segment spans residues 188 to 208 (NSFIPFSLCLTSLLFLFLSLV). Residues 209 to 238 (RHTRNLKLSSLGSRDSSTEAHRRAMKMVMS) lie on the Cytoplasmic side of the membrane. A helical transmembrane segment spans residues 239–259 (LLFLFIVHFFSLQVANWTFCI). The Extracellular portion of the chain corresponds to 260–265 (LGNNKY). A helical transmembrane segment spans residues 266–286 (TQFVTLALHAFPSCHSFILIL). The Cytoplasmic portion of the chain corresponds to 287-314 (GNSKLRQTAVRLLWHLRNYTKRPNPLPL).

This sequence belongs to the G-protein coupled receptor T2R family.

Its subcellular location is the membrane. Its function is as follows. Receptor that may play a role in the perception of bitterness and is gustducin-linked. May play a role in sensing the chemical composition of the gastrointestinal content. The activity of this receptor may stimulate alpha gustducin, mediate PLC-beta-2 activation and lead to the gating of TRPM5. This is Taste receptor type 2 member 42 (TAS2R42) from Macaca mulatta (Rhesus macaque).